Reading from the N-terminus, the 155-residue chain is MGEMGKAIGLLISGTLVYHHCANRNATLLSLISDVLIVLLSSLAILGLLFRHLNVSVPVDPLEWQISQDTACNIVARLANTVGAAESVLRVAATGHDKRLFVKVVICLYFLAALGRIISGVTIAYAGLCLFCLSMLFRSSIRNSVLNRRNGEILD.

In terms of domain architecture, Reticulon spans 1–155 (MGEMGKAIGL…LNRRNGEILD (155 aa)). 2 helical membrane-spanning segments follow: residues 30–50 (SLISDVLIVLLSSLAILGLLF) and 117–137 (IISGVTIAYAGLCLFCLSMLF).

Its subcellular location is the endoplasmic reticulum membrane. This is Reticulon-like protein B23 (RTNLB23) from Arabidopsis thaliana (Mouse-ear cress).